Here is a 62-residue protein sequence, read N- to C-terminus: Beta-defensin 10 (62 aa).

Residues 1–22 (MRLHHLLLLLLLVVLSSGSGFT) form the signal peptide. Glutamine 23 carries the post-translational modification Pyrrolidone carboxylic acid. Disulfide bonds link cysteine 31–cysteine 60, cysteine 38–cysteine 53, and cysteine 43–cysteine 61.

The protein belongs to the beta-defensin family. As to expression, neutrophilic granules.

The protein localises to the secreted. Its function is as follows. Has bactericidal activity. Active against E.coli ML35 and S.aureus 502A. The protein is Beta-defensin 10 (DEFB10) of Bos taurus (Bovine).